A 325-amino-acid polypeptide reads, in one-letter code: Glutarate 2-hydroxylase (325 aa).

Residues histidine 160, aspartate 162, and histidine 292 each coordinate Fe cation.

The protein belongs to the glutarate hydroxylase family. Homotetramer. The cofactor is Fe(2+).

It carries out the reaction glutarate + 2-oxoglutarate + O2 = (S)-2-hydroxyglutarate + succinate + CO2. The protein operates within amino-acid degradation. Functionally, acts as an alpha-ketoglutarate-dependent dioxygenase catalyzing hydroxylation of glutarate (GA) to L-2-hydroxyglutarate (L2HG). Functions in a L-lysine degradation pathway that proceeds via cadaverine, glutarate and L-2-hydroxyglutarate. Is extremely specific for glutarate, but it can use both 2-oxoglutarate and 2-oxoadipate (2OA) as a cosubstrate for L2HG formation. This is Glutarate 2-hydroxylase from Pseudomonas putida (strain ATCC 47054 / DSM 6125 / CFBP 8728 / NCIMB 11950 / KT2440).